We begin with the raw amino-acid sequence, 383 residues long: Chitinase-3-like protein 1 (383 aa).

A signal peptide spans Met-1–Ala-21. Positions Tyr-22 to Ala-383 constitute a GH18 domain. Cysteines 26 and 51 form a disulfide. N-linked (GlcNAc...) asparagine glycosylation occurs at Asn-60. Residues Glu-70 to Trp-71, Gly-97 to Asn-100, Tyr-141, Leu-204 to Asp-207, and Arg-263 contribute to the chitin site. An intrachain disulfide couples Cys-300 to Cys-364. An important for AKT1 activation and IL8 production region spans residues Gln-324–Ala-338. Trp-352 contacts chitin.

It belongs to the glycosyl hydrolase 18 family. As to quaternary structure, monomer. In terms of tissue distribution, detected in smooth muscle cells in atherosclerotic plaques. Detected in regions of vascular occlusion in the aorta.

It localises to the secreted. It is found in the extracellular space. The protein localises to the cytoplasm. The protein resides in the perinuclear region. Its subcellular location is the endoplasmic reticulum. Carbohydrate-binding lectin with a preference for chitin. Has no chitinase activity. May play a role in tissue remodeling and in the capacity of cells to respond to and cope with changes in their environment. Plays a role in T-helper cell type 2 (Th2) inflammatory response and IL-13-induced inflammation, regulating allergen sensitization, inflammatory cell apoptosis, dendritic cell accumulation and M2 macrophage differentiation. Facilitates invasion of pathogenic enteric bacteria into colonic mucosa and lymphoid organs. Mediates activation of AKT1 signaling pathway and subsequent IL8 production in colonic epithelial cells. Regulates antibacterial responses in lung by contributing to macrophage bacterial killing, controlling bacterial dissemination and augmenting host tolerance. Also regulates hyperoxia-induced injury, inflammation and epithelial apoptosis in lung. Stimulates migration and adhesion of cultured vascular smooth muscle cells. In Sus scrofa (Pig), this protein is Chitinase-3-like protein 1 (CHI3L1).